The following is a 940-amino-acid chain: Vacuolar protein sorting-associated protein 54 (940 aa).

At Thr30 the chain carries Phosphothreonine. Residues 192 to 218 (QQLERDKPLENGAQGAPGPGTGGQTPT) are disordered. A coiled-coil region spans residues 299 to 325 (HAILAEMEQAADQVRQLRAALAELHSH).

It belongs to the VPS54 family.

The protein resides in the golgi apparatus. It localises to the trans-Golgi network. Functionally, may be involved in retrograde transport from early and late endosomes to late Golgi. Required during spermatogenesis for sperm individualization. In Drosophila melanogaster (Fruit fly), this protein is Vacuolar protein sorting-associated protein 54 (scat).